A 236-amino-acid polypeptide reads, in one-letter code: (5-formylfuran-3-yl)methyl phosphate synthase (236 aa).

Catalysis depends on lysine 27, which acts as the Schiff-base intermediate with substrate. Residue lysine 85 is the Proton acceptor of the active site.

The protein belongs to the MfnB family.

The catalysed reaction is 2 D-glyceraldehyde 3-phosphate = 4-(hydroxymethyl)-2-furancarboxaldehyde phosphate + phosphate + 2 H2O. The protein operates within cofactor biosynthesis; methanofuran biosynthesis. Catalyzes the formation of 4-(hydroxymethyl)-2-furancarboxaldehyde phosphate (4-HFC-P) from two molecules of glyceraldehyde-3-P (GA-3-P). The sequence is that of (5-formylfuran-3-yl)methyl phosphate synthase from Methanococcus maripaludis (strain DSM 14266 / JCM 13030 / NBRC 101832 / S2 / LL).